A 148-amino-acid chain; its full sequence is MFHRPVLQVFRQFARCQSTDSLSAILERSMNKVQLLGRVGQDPVMRQADGKNPVTIFSLATNELWRSGENEVFQPAGDVNQKTTWHRVSVFRPGLRDVAYQHVKKGARLLVEGKIDYGEYTDKNNVRRQATTIIADNIIFLTDLRDKP.

A mitochondrion-targeting transit peptide spans 1–17 (MFHRPVLQVFRQFARCQ). Residues 30 to 142 (MNKVQLLGRV…IIADNIIFLT (113 aa)) form the SSB domain.

In terms of assembly, homotetramer.

The protein localises to the mitochondrion. Its subcellular location is the mitochondrion matrix. It localises to the mitochondrion nucleoid. Binds preferentially and cooperatively to pyrimidine rich single-stranded DNA (ss-DNA). Required to maintain the copy number of mitochondrial DNA (mtDNA) and plays crucial roles during mtDNA replication that stimulate activity of the DNA polymerase at the replication fork. May also function in mtDNA repair. The sequence is that of Single-stranded DNA-binding protein 1-B, mitochondrial (ssbp1-b) from Xenopus laevis (African clawed frog).